Here is a 241-residue protein sequence, read N- to C-terminus: MSGESARSLGKGSAPPGPVPEGSIRIYSMRFCPFAERTRLVLKAKGIRHEVININLKNKPEWFFKKNPFGLVPVLENSQGQLIYESAITCEYLDEAYPGKKLLPDDPYEKACQKMILELFSKVPSLVGSFIRSQNKEDYAGLKEEFRKEFTKLEEVLTNKKTTFFGGNSISMIDYLIWPWFERLEAMKLNECVDHTPKLKLWMAAMKEDPTVSALLTSEKDWQGFLELYLQNSPEACDYGL.

Residue Ser2 is modified to N-acetylserine. The region spanning 22-101 is the GST N-terminal domain; sequence GSIRIYSMRF…YLDEAYPGKK (80 aa). The Nucleophile role is filled by Cys32. At Lys57 the chain carries N6-acetyllysine. Glutathione is bound by residues Lys59, Val72, and 85–86; that span reads ES. One can recognise a GST C-terminal domain in the interval 106–230; that stretch reads DPYEKACQKM…DWQGFLELYL (125 aa). Ser129 is subject to Phosphoserine. N6-acetyllysine occurs at positions 143, 148, and 152.

Belongs to the GST superfamily. Omega family. As to quaternary structure, homodimer. As to expression, ubiquitous. Highest expression in liver, pancreas, skeletal muscle, spleen, thymus, colon, blood leukocyte and heart. Lowest expression in brain, placenta and lung.

Its subcellular location is the cytoplasm. The protein localises to the cytosol. It carries out the reaction RX + glutathione = an S-substituted glutathione + a halide anion + H(+). The enzyme catalyses L-dehydroascorbate + 2 glutathione = glutathione disulfide + L-ascorbate. It catalyses the reaction methylarsonate + 2 glutathione + H(+) = methylarsonous acid + glutathione disulfide + H2O. Its activity is regulated as follows. Monomethylarsonic acid reductase activity is competitively inhibited by 1-chloro 2,4-dinitrobenzene (CDNB) and by deoxycholate. Functionally, exhibits glutathione-dependent thiol transferase and dehydroascorbate reductase activities. Has S-(phenacyl)glutathione reductase activity. Also has glutathione S-transferase activity. Participates in the biotransformation of inorganic arsenic and reduces monomethylarsonic acid (MMA) and dimethylarsonic acid. This Homo sapiens (Human) protein is Glutathione S-transferase omega-1 (GSTO1).